A 705-amino-acid chain; its full sequence is Ribosomal RNA large subunit methyltransferase K/L (705 aa).

Residues 43 to 154 (VVYRCCLWSR…GEKGILGFDL (112 aa)) form the THUMP domain.

It belongs to the methyltransferase superfamily. RlmKL family.

It localises to the cytoplasm. The enzyme catalyses guanosine(2445) in 23S rRNA + S-adenosyl-L-methionine = N(2)-methylguanosine(2445) in 23S rRNA + S-adenosyl-L-homocysteine + H(+). The catalysed reaction is guanosine(2069) in 23S rRNA + S-adenosyl-L-methionine = N(2)-methylguanosine(2069) in 23S rRNA + S-adenosyl-L-homocysteine + H(+). Its function is as follows. Specifically methylates the guanine in position 2445 (m2G2445) and the guanine in position 2069 (m7G2069) of 23S rRNA. The sequence is that of Ribosomal RNA large subunit methyltransferase K/L from Aliivibrio fischeri (strain MJ11) (Vibrio fischeri).